Consider the following 347-residue polypeptide: Protein-glutamate methylesterase/protein-glutamine glutaminase 2 (347 aa).

The 118-residue stretch at 2–119 (RVMIVDDSAV…LGGADLYRKD (118 aa)) folds into the Response regulatory domain. Residue Asp52 is modified to 4-aspartylphosphate. Residues 131 to 153 (AARPAPPQAAPRPTLAPPSSDPA) are disordered. The segment covering 134 to 150 (PAPPQAAPRPTLAPPSS) has biased composition (pro residues). In terms of domain architecture, CheB-type methylesterase spans 152-346 (PAGPIEAVVV…PYIASRARSV (195 aa)). Active-site residues include Ser164, His191, and Asp288.

Belongs to the CheB family. Post-translationally, phosphorylated by CheA. Phosphorylation of the N-terminal regulatory domain activates the methylesterase activity.

Its subcellular location is the cytoplasm. The enzyme catalyses [protein]-L-glutamate 5-O-methyl ester + H2O = L-glutamyl-[protein] + methanol + H(+). The catalysed reaction is L-glutaminyl-[protein] + H2O = L-glutamyl-[protein] + NH4(+). In terms of biological role, involved in chemotaxis. Part of a chemotaxis signal transduction system that modulates chemotaxis in response to various stimuli. Catalyzes the demethylation of specific methylglutamate residues introduced into the chemoreceptors (methyl-accepting chemotaxis proteins or MCP) by CheR. Also mediates the irreversible deamidation of specific glutamine residues to glutamic acid. This chain is Protein-glutamate methylesterase/protein-glutamine glutaminase 2, found in Caulobacter vibrioides (strain ATCC 19089 / CIP 103742 / CB 15) (Caulobacter crescentus).